The chain runs to 165 residues: Large ribosomal subunit protein uL10 (165 aa).

This sequence belongs to the universal ribosomal protein uL10 family. Part of the ribosomal stalk of the 50S ribosomal subunit. The N-terminus interacts with L11 and the large rRNA to form the base of the stalk. The C-terminus forms an elongated spine to which L12 dimers bind in a sequential fashion forming a multimeric L10(L12)X complex.

In terms of biological role, forms part of the ribosomal stalk, playing a central role in the interaction of the ribosome with GTP-bound translation factors. In Borrelia turicatae (strain 91E135), this protein is Large ribosomal subunit protein uL10.